The chain runs to 111 residues: Phosphoribosyl-ATP pyrophosphatase (111 aa).

This sequence belongs to the PRA-PH family.

It is found in the cytoplasm. The enzyme catalyses 1-(5-phospho-beta-D-ribosyl)-ATP + H2O = 1-(5-phospho-beta-D-ribosyl)-5'-AMP + diphosphate + H(+). It functions in the pathway amino-acid biosynthesis; L-histidine biosynthesis; L-histidine from 5-phospho-alpha-D-ribose 1-diphosphate: step 2/9. The chain is Phosphoribosyl-ATP pyrophosphatase from Pseudomonas putida (strain GB-1).